Here is a 603-residue protein sequence, read N- to C-terminus: Mono(2-hydroxyethyl) terephthalate hydrolase (603 aa).

An N-terminal signal peptide occupies residues 1–17; it reads MQTTVTTMLLASVALAA. C18 is lipidated: N-palmitoyl cysteine. The S-diacylglycerol cysteine moiety is linked to residue C18. Residues 24 to 44 are disordered; sequence TPLPLPQQQPPQQEPPPPPVP. Residues 26–44 show a composition bias toward pro residues; sequence LPLPQQQPPQQEPPPPPVP. A disulfide bond links C51 and C92. G132 is a 4-[(2-hydroxyethoxy)carbonyl]benzoate binding site. 4 disulfides stabilise this stretch: C224–C529, C303–C320, C340–C348, and C577–C599. S225 serves as the catalytic Acyl-ester intermediate. E226 lines the 4-[(2-hydroxyethoxy)carbonyl]benzoate pocket. Ca(2+)-binding residues include D304, D307, L309, D311, and I313. The 4-[(2-hydroxyethoxy)carbonyl]benzoate site is built by R411 and S416. Residues D492 and H528 each act as charge relay system in the active site. H528 is a 4-[(2-hydroxyethoxy)carbonyl]benzoate binding site.

It belongs to the tannase family.

Its subcellular location is the cell outer membrane. It catalyses the reaction 4-[(2-hydroxyethoxy)carbonyl]benzoate + H2O = terephthalate + ethylene glycol + H(+). In terms of biological role, involved in the degradation and assimilation of the plastic poly(ethylene terephthalate) (PET), which allows I.sakaiensis to use PET as its major energy and carbon source for growth. Likely acts synergistically with PETase to depolymerize PET. Catalyzes the hydrolysis of mono(2-hydroxyethyl) terephthalate (MHET) into its two environmentally benign monomers, terephthalate and ethylene glycol. Does not show activity against PET, bis(hydroxyethyl) terephthalate (BHET), pNP-aliphatic esters or typical aromatic ester compounds catalyzed by the tannase family enzymes, such as ethyl gallate and ethyl ferulate. This is Mono(2-hydroxyethyl) terephthalate hydrolase from Piscinibacter sakaiensis (Ideonella sakaiensis).